Reading from the N-terminus, the 469-residue chain is Glutamine synthetase (469 aa).

In terms of domain architecture, GS beta-grasp spans 14-99 (NDVKFVDLRF…FCDILDPVSG (86 aa)). The GS catalytic domain occupies 106–469 (PRGTAKKAEA…PVEFDMYYSV (364 aa)). Positions 131 and 133 each coordinate Mg(2+). Position 209 (Glu209) interacts with ATP. 2 residues coordinate Mg(2+): Glu214 and Glu221. Residues 265 to 266 (NG) and Gly266 each bind L-glutamate. Mg(2+) is bound at residue His270. ATP is bound by residues 272–274 (HLS) and Ser274. Positions 322, 328, and 340 each coordinate L-glutamate. ATP-binding residues include Arg340, Arg345, and Lys353. A Mg(2+)-binding site is contributed by Glu358. Residue Arg360 participates in L-glutamate binding. Tyr398 is modified (O-AMP-tyrosine).

It belongs to the glutamine synthetase family. In terms of assembly, oligomer of 12 subunits arranged in the form of two hexameric ring. Requires Mg(2+) as cofactor.

Its subcellular location is the cytoplasm. The enzyme catalyses L-glutamate + NH4(+) + ATP = L-glutamine + ADP + phosphate + H(+). With respect to regulation, the activity of this enzyme could be controlled by adenylation under conditions of abundant glutamine. Functionally, catalyzes the ATP-dependent biosynthesis of glutamine from glutamate and ammonia. This chain is Glutamine synthetase, found in Rhizobium meliloti (strain 1021) (Ensifer meliloti).